A 202-amino-acid chain; its full sequence is Glycerol-3-phosphate acyltransferase (202 aa).

4 consecutive transmembrane segments (helical) span residues 2–22 (ANLLFALAAYLIGSVSFAVVV), 85–105 (LAMVALAVFLGHLFPVFHRFA), 119–139 (AINPILGLATLATWVIIAFFF), and 158–178 (VLMEGIDAMAGAVLIIAILLI).

It belongs to the PlsY family. Probably interacts with PlsX.

The protein localises to the cell inner membrane. The catalysed reaction is an acyl phosphate + sn-glycerol 3-phosphate = a 1-acyl-sn-glycero-3-phosphate + phosphate. The protein operates within lipid metabolism; phospholipid metabolism. Its function is as follows. Catalyzes the transfer of an acyl group from acyl-phosphate (acyl-PO(4)) to glycerol-3-phosphate (G3P) to form lysophosphatidic acid (LPA). This enzyme utilizes acyl-phosphate as fatty acyl donor, but not acyl-CoA or acyl-ACP. The chain is Glycerol-3-phosphate acyltransferase from Cupriavidus pinatubonensis (strain JMP 134 / LMG 1197) (Cupriavidus necator (strain JMP 134)).